Reading from the N-terminus, the 474-residue chain is Siroheme synthase (474 aa).

Residues 1-203 (MKLFPLFADL…QRPEEAERLL (203 aa)) form a precorrin-2 dehydrogenase /sirohydrochlorin ferrochelatase region. Residues 22–23 (EI) and 43–44 (PA) contribute to the NAD(+) site. Ser128 is modified (phosphoserine). The interval 216–474 (GSVVLVGAGP…QRPAPAALAA (259 aa)) is uroporphyrinogen-III C-methyltransferase. Residue Pro225 coordinates S-adenosyl-L-methionine. Catalysis depends on Asp248, which acts as the Proton acceptor. Lys270 serves as the catalytic Proton donor. S-adenosyl-L-methionine-binding positions include 302–304 (GGD), Ile307, 332–333 (TA), Met384, and Gly413.

This sequence in the N-terminal section; belongs to the precorrin-2 dehydrogenase / sirohydrochlorin ferrochelatase family. In the C-terminal section; belongs to the precorrin methyltransferase family.

The catalysed reaction is uroporphyrinogen III + 2 S-adenosyl-L-methionine = precorrin-2 + 2 S-adenosyl-L-homocysteine + H(+). The enzyme catalyses precorrin-2 + NAD(+) = sirohydrochlorin + NADH + 2 H(+). It catalyses the reaction siroheme + 2 H(+) = sirohydrochlorin + Fe(2+). The protein operates within cofactor biosynthesis; adenosylcobalamin biosynthesis; precorrin-2 from uroporphyrinogen III: step 1/1. Its pathway is cofactor biosynthesis; adenosylcobalamin biosynthesis; sirohydrochlorin from precorrin-2: step 1/1. It functions in the pathway porphyrin-containing compound metabolism; siroheme biosynthesis; precorrin-2 from uroporphyrinogen III: step 1/1. It participates in porphyrin-containing compound metabolism; siroheme biosynthesis; siroheme from sirohydrochlorin: step 1/1. The protein operates within porphyrin-containing compound metabolism; siroheme biosynthesis; sirohydrochlorin from precorrin-2: step 1/1. Its function is as follows. Multifunctional enzyme that catalyzes the SAM-dependent methylations of uroporphyrinogen III at position C-2 and C-7 to form precorrin-2 via precorrin-1. Then it catalyzes the NAD-dependent ring dehydrogenation of precorrin-2 to yield sirohydrochlorin. Finally, it catalyzes the ferrochelation of sirohydrochlorin to yield siroheme. This is Siroheme synthase from Bordetella petrii (strain ATCC BAA-461 / DSM 12804 / CCUG 43448).